Here is a 203-residue protein sequence, read N- to C-terminus: Probable flagellin 1 (203 aa).

Positions 1–11 (MGMRFLKNEKG) are excised as a propeptide.

Belongs to the archaeal flagellin family.

Its subcellular location is the archaeal flagellum. In terms of biological role, flagellin is the subunit protein which polymerizes to form the filaments of archaeal flagella. In Archaeoglobus fulgidus (strain ATCC 49558 / DSM 4304 / JCM 9628 / NBRC 100126 / VC-16), this protein is Probable flagellin 1 (flaB1).